Consider the following 752-residue polypeptide: Peptidyl-prolyl cis-trans isomerase G (752 aa).

The region spanning 11 to 176 (FFDIAINNQP…AEVRILSCGE (166 aa)) is the PPIase cyclophilin-type domain. Residues 182-193 (KVKKEEKKRHKS) show a composition bias toward basic residues. A disordered region spans residues 182–752 (KVKKEEKKRH…SPGTDEDKSG (571 aa)). Positions 194 to 214 (SSSSSSSDSDSSSDSQSSSDS) are enriched in low complexity. Positions 226–251 (RKRKKKHRKNSRKHKKEKKKRKKSKK) are enriched in basic residues. A phosphoserine mark is found at S252, S254, S255, S257, and S288. The span at 290 to 308 (PKADDKERKNREREREREC) shows a compositional bias: basic and acidic residues. The residue at position 313 (S313) is a Phosphoserine. Basic residues predominate over residues 327 to 345 (FGRKIKGRGPRRYRTPSRS). Basic and acidic residues-rich tracts occupy residues 346–366 (RSRDRFRRSETPPHWRQEMQR) and 377–447 (RWIK…DKYN). S354 carries the phosphoserine modification. T356 is modified (phosphothreonine). Position 384 is a phosphoserine (S384). K390 is covalently cross-linked (Glycyl lysine isopeptide (Lys-Gly) (interchain with G-Cter in SUMO2)). S395, S411, and S413 each carry phosphoserine. Residues 448 to 461 (KNKVKKRGKSKSRS) are compositionally biased toward basic residues. Composition is skewed to basic and acidic residues over residues 462-552 (KSKE…DLTK) and 577-598 (RSHDRDRSRSKEYHRYREQEYR). Residues 599-625 (RRGRSRSRDRRTPGRSRSKDRRRRRRD) are compositionally biased toward basic residues. A compositionally biased stretch (basic and acidic residues) spans 626 to 682 (SRSSEREESQSRNKEKYRSQDSKSSHRKENSEGEKRMYSKSRDHSSSNNNREKKADI). Phosphoserine occurs at positions 685 and 688. A compositionally biased stretch (polar residues) spans 685-705 (SPVSKTKQSSQDNEVKSSTLK). K691 participates in a covalent cross-link: Glycyl lysine isopeptide (Lys-Gly) (interchain with G-Cter in SUMO2). 3 positions are modified to phosphoserine: S694, S742, and S743. Residues 706–752 (NQEDEKTRSPVEKENQKSKGQENDHVHDKNKKCDHESSPGTDEDKSG) show a composition bias toward basic and acidic residues. Position 746 is a phosphothreonine (T746). Phosphoserine is present on S751.

Interacts with CLK1, PNN and with the phosphorylated C-terminal domain of RNA polymerase II.

The protein localises to the nucleus matrix. The protein resides in the nucleus speckle. The catalysed reaction is [protein]-peptidylproline (omega=180) = [protein]-peptidylproline (omega=0). Its activity is regulated as follows. Inhibited by cyclosporin A (CsA). PPIase that catalyzes the cis-trans isomerization of proline imidic peptide bonds in oligopeptides and may therefore assist protein folding. May be implicated in the folding, transport, and assembly of proteins. May play an important role in the regulation of pre-mRNA splicing. The protein is Peptidyl-prolyl cis-trans isomerase G (Ppig) of Rattus norvegicus (Rat).